A 419-amino-acid polypeptide reads, in one-letter code: DNA ligase (419 aa).

The interval Met1 to Asn120 is NTD. The interval Arg121–Leu317 is AD domain. Positions 149, 151, 203, and 232 each coordinate ATP. Lys151 (N6-AMP-lysine intermediate) is an active-site residue. Residue Glu203 participates in a divalent metal cation binding. Glu291 contributes to the a divalent metal cation binding site. Ile294 and Lys316 together coordinate ATP. The OB domain stretch occupies residues Lys318–Ile419.

It belongs to the ATP-dependent DNA ligase family. A divalent metal cation is required as a cofactor.

Its subcellular location is the virion. The catalysed reaction is ATP + (deoxyribonucleotide)n-3'-hydroxyl + 5'-phospho-(deoxyribonucleotide)m = (deoxyribonucleotide)n+m + AMP + diphosphate.. Its function is as follows. Very low-fidelity DNA ligase that seals nicks in double-stranded DNA during DNA repair. Together with the viral repair DNA polymerase X, fills the single nucleotide gaps generated by the AP endonuclease. It is not essential for viral replication and recombination. Displays a very low adenylation activity towards DNA with 3'-dideoxy- or 3'-amino-terminated nicks compared to regular nick DNA. The protein is DNA ligase (LIG) of Ornithodoros (relapsing fever ticks).